A 715-amino-acid polypeptide reads, in one-letter code: Eukaryotic peptide chain release factor GTP-binding subunit (715 aa).

The segment covering 1–12 (MANASLNGDQSK) has biased composition (polar residues). Disordered regions lie at residues 1-148 (MANA…SLNK) and 168-262 (ATKK…SNSA). Residues 5–128 (SLNGDQSKQQ…PQQQQQQQSQ (124 aa)) are several sort of repeats. A compositionally biased stretch (low complexity) spans 13 to 25 (QQQQQQQQQQQQQ). Residues 26-37 (NYYNPNAAQSFV) are compositionally biased toward polar residues. Low complexity-rich tracts occupy residues 39–129 (QGGY…QSQG) and 176–198 (SKPQ…ASAP). Residues 129 to 285 (GMSLADFQKQ…DEIDEEVVKD (157 aa)) are charged. Composition is skewed to basic and acidic residues over residues 199 to 208 (QEEKKEEKEA) and 218 to 233 (ETKK…KKEA). Residues 290 to 515 (KDHVSIIFMG…YLDNMDTMNR (226 aa)) form the tr-type G domain. Residues 299-306 (GHVDAGKS) are G1. GTP is bound at residue 299-306 (GHVDAGKS). Residues 355-359 (GKTIE) form a G2 region. At Thr-373 the chain carries Phosphothreonine. The tract at residues 376-379 (DAPG) is G3. Residues 376 to 380 (DAPGH) and 438 to 441 (NKMD) each bind GTP. A G4 region spans residues 438–441 (NKMD). A G5 region spans residues 479-481 (SGY).

Belongs to the TRAFAC class translation factor GTPase superfamily. Classic translation factor GTPase family. ERF3 subfamily.

Its subcellular location is the cytoplasm. Its function is as follows. Involved in translation termination. Stimulates the activity of ERF1. Binds guanine nucleotides. In Candida albicans (Yeast), this protein is Eukaryotic peptide chain release factor GTP-binding subunit (SUP35).